A 584-amino-acid polypeptide reads, in one-letter code: Mitochondrial sodium/calcium exchanger protein (584 aa).

Residues methionine 1–glycine 26 form the signal peptide. Topologically, residues threonine 27–leucine 95 are extracellular. Asparagine 60 carries an N-linked (GlcNAc...) asparagine glycan. Residues leucine 96–valine 116 form a helical membrane-spanning segment. Residues threonine 117–alanine 140 lie on the Cytoplasmic side of the membrane. The helical transmembrane segment at glycine 141–phenylalanine 161 threads the bilayer. Residues serine 162–glycine 168 are Extracellular-facing. The helical transmembrane segment at leucine 169–isoleucine 189 threads the bilayer. Topologically, residues threonine 190 to arginine 200 are cytoplasmic. A helical transmembrane segment spans residues proline 201 to phenylalanine 221. Residues arginine 222–threonine 226 are Extracellular-facing. The chain crosses the membrane as a helical span at residues leucine 227 to cysteine 247. Topologically, residues threonine 248–lysine 325 are cytoplasmic. Phosphoserine; by PKA is present on serine 258. A helical membrane pass occupies residues alanine 326 to aspartate 346. Residues proline 347 to cysteine 360 lie on the Extracellular side of the membrane. Residues leucine 361–valine 381 traverse the membrane as a helical segment. The Cytoplasmic segment spans residues tyrosine 382 to glutamate 383. A helical transmembrane segment spans residues isoleucine 384–valine 404. Over threonine 405–arginine 416 the chain is Extracellular. Residues leucine 417 to alanine 437 form a helical membrane-spanning segment. The Cytoplasmic segment spans residues threonine 438–arginine 445. Residues serine 446 to glycine 466 traverse the membrane as a helical segment. Over asparagine 467 to alanine 487 the chain is Extracellular. The chain crosses the membrane as a helical span at residues phenylalanine 488–leucine 508. The Cytoplasmic portion of the chain corresponds to leucine 509 to glycine 524. The chain crosses the membrane as a helical span at residues leucine 525–valine 545. Over proline 546–phenylalanine 558 the chain is Extracellular. A helical transmembrane segment spans residues cysteine 559–isoleucine 579. The Cytoplasmic portion of the chain corresponds to histidine 580–methionine 584.

This sequence belongs to the Ca(2+):cation antiporter (CaCA) (TC 2.A.19) family. SLC24A subfamily. In terms of processing, phosphorylation at Ser-258 by PKA prevents calcium overload. As to expression, present in pancreatic beta-cells (at protein level).

Its subcellular location is the mitochondrion inner membrane. The catalysed reaction is Ca(2+)(in) + 3 Na(+)(out) = Ca(2+)(out) + 3 Na(+)(in). It carries out the reaction 3 Li(+)(out) + Ca(2+)(in) = 3 Li(+)(in) + Ca(2+)(out). With respect to regulation, inhibited by the sodium/calcium exchanger inhibitor CGP-37157. Strongly inhibited by zinc. Its function is as follows. Mitochondrial sodium/calcium antiporter that mediates sodium-dependent calcium efflux from mitochondrion, by mediating the exchange of 3 sodium ions per 1 calcium ion. Plays a central role in mitochondrial calcium homeostasis by mediating mitochondrial calcium extrusion: calcium efflux is essential for mitochondrial function and cell survival, notably in cardiomyocytes. Regulates rates of glucose-dependent insulin secretion in pancreatic beta-cells during the first phase of insulin secretion: acts by mediating efflux of calcium from mitochondrion, thereby affecting cytoplasmic calcium responses. Required for store-operated Ca(2+) entry (SOCE) and Ca(2+) release-activated Ca(2+) (CRAC) channel regulation: sodium transport by SLC8B1 leads to promote calcium-shuttling that modulates mitochondrial redox status, thereby regulating SOCE activity. Involved in B-lymphocyte chemotaxis. Able to transport Ca(2+) in exchange of either Li(+) or Na(+), explaining how Li(+) catalyzes Ca(2+) exchange. In contrast to other members of the family its function is independent of K(+). In Homo sapiens (Human), this protein is Mitochondrial sodium/calcium exchanger protein.